The sequence spans 130 residues: MSMQDPLADMLTRIRNAQMAEKSVVSMPSSKLKVAVAKVLKDEGYIAGYQISSETKPLLSIELKYFEGRSVIEEVKRVSRPGLRQYKSAEDLPKVRGGLGVSIVSTNKGVMTDRAARAAGVGGEVLCTVF.

Belongs to the universal ribosomal protein uS8 family. Part of the 30S ribosomal subunit. Contacts proteins S5 and S12.

In terms of biological role, one of the primary rRNA binding proteins, it binds directly to 16S rRNA central domain where it helps coordinate assembly of the platform of the 30S subunit. This is Small ribosomal subunit protein uS8 from Pseudomonas fluorescens (strain SBW25).